Consider the following 96-residue polypeptide: Co-chaperonin GroES (96 aa).

The protein belongs to the GroES chaperonin family. Heptamer of 7 subunits arranged in a ring. Interacts with the chaperonin GroEL.

Its subcellular location is the cytoplasm. Its function is as follows. Together with the chaperonin GroEL, plays an essential role in assisting protein folding. The GroEL-GroES system forms a nano-cage that allows encapsulation of the non-native substrate proteins and provides a physical environment optimized to promote and accelerate protein folding. GroES binds to the apical surface of the GroEL ring, thereby capping the opening of the GroEL channel. The protein is Co-chaperonin GroES of Geotalea daltonii (strain DSM 22248 / JCM 15807 / FRC-32) (Geobacter daltonii).